Consider the following 80-residue polypeptide: DNA-directed RNA polymerase subunit Rpo5 (80 aa).

It belongs to the archaeal Rpo5/eukaryotic RPB5 RNA polymerase subunit family. Part of the RNA polymerase complex.

Its subcellular location is the cytoplasm. The catalysed reaction is RNA(n) + a ribonucleoside 5'-triphosphate = RNA(n+1) + diphosphate. Functionally, DNA-dependent RNA polymerase (RNAP) catalyzes the transcription of DNA into RNA using the four ribonucleoside triphosphates as substrates. This Thermofilum pendens (strain DSM 2475 / Hrk 5) protein is DNA-directed RNA polymerase subunit Rpo5.